Consider the following 53-residue polypeptide: Mannose/glucose-specific lectin alpha chain (53 aa).

The protein belongs to the leguminous lectin family. Heterodimer of an alpha and a beta chain.

This lectin specifically binds mannose and glucose. The protein is Mannose/glucose-specific lectin alpha chain of Vicia cracca (Bird vetch).